Consider the following 191-residue polypeptide: Ribonuclease M5 1 (191 aa).

The Toprim domain occupies 10–93 (KEVIVVEGKD…AFLTKHDAAP (84 aa)). Residues glutamate 16, aspartate 62, and aspartate 64 each coordinate Mg(2+).

Belongs to the ribonuclease M5 family. Requires Mg(2+) as cofactor.

The protein resides in the cytoplasm. It carries out the reaction Endonucleolytic cleavage of RNA, removing 21 and 42 nucleotides, respectively, from the 5'- and 3'-termini of a 5S-rRNA precursor.. In terms of biological role, required for correct processing of both the 5' and 3' ends of 5S rRNA precursor. Cleaves both sides of a double-stranded region yielding mature 5S rRNA in one step. In Ligilactobacillus salivarius (strain CECT 5713) (Lactobacillus salivarius), this protein is Ribonuclease M5 1.